The following is a 565-amino-acid chain: Oxygen-dependent choline dehydrogenase (565 aa).

Position 6–35 (6–35) interacts with FAD; the sequence is DYIIVGAGSAGNTLATRLTEDAGVTVLLLE. A disordered region spans residues 182–201; sequence QQEGFGPMDRTVTKNGRRSS. The active-site Proton acceptor is the H475.

The protein belongs to the GMC oxidoreductase family. FAD is required as a cofactor.

It carries out the reaction choline + A = betaine aldehyde + AH2. The catalysed reaction is betaine aldehyde + NAD(+) + H2O = glycine betaine + NADH + 2 H(+). The protein operates within amine and polyamine biosynthesis; betaine biosynthesis via choline pathway; betaine aldehyde from choline (cytochrome c reductase route): step 1/1. Its function is as follows. Involved in the biosynthesis of the osmoprotectant glycine betaine. Catalyzes the oxidation of choline to betaine aldehyde and betaine aldehyde to glycine betaine at the same rate. This chain is Oxygen-dependent choline dehydrogenase, found in Pseudomonas putida (strain ATCC 47054 / DSM 6125 / CFBP 8728 / NCIMB 11950 / KT2440).